A 546-amino-acid polypeptide reads, in one-letter code: MQNINPTQTAAWSALEQHKADNLNIPQLFAEDANRFDKYHLNFEQQILVDFSKNAINQKTLELLRQLANECGLASATEAMFSGQKINRTENRAVLHTALRNRSNTPVLVDGKDVMPEVNAVLAKMKDFCERIISGSWKGYTGKAITDVINIGIGGSDLGPYMVTEALRPYKNHLNMHFVSNVDGTHIAEVLKKVNPETTLVLVASKTFTTQETMANALTAREWLLAAVKDESAVAKHFAALSTNAKEVAKFGIDTANMFEFWDWVGGRYSLWSAIGLSIALSLGFENFEALLSGAHAMDNHFRTAPIEKNIPTTLALIGIWNSNFLGAETEALLPYDQYLHRFAAYFQQGNMESNGKFVGRDGSPVTHQTGPIVWGEPGTNGQHAFYQLIHQGTKLIPCDFIAPAQTHNPVGDHHAKLLSNFFAQTEALAFGKSKETVEAEFVAAGKNLADVAEIVPFKVFTGNKPTNSILVQKITPFTLGALIAMYEHKIFVQGVIFNIYSFDQWGVELGKQLANRILPELQNAEKISSHDSSTNGLINQFKAWR.

The Proton donor role is filled by Glu353. Catalysis depends on residues His384 and Lys512.

It belongs to the GPI family.

The protein resides in the cytoplasm. It catalyses the reaction alpha-D-glucose 6-phosphate = beta-D-fructose 6-phosphate. The protein operates within carbohydrate biosynthesis; gluconeogenesis. Its pathway is carbohydrate degradation; glycolysis; D-glyceraldehyde 3-phosphate and glycerone phosphate from D-glucose: step 2/4. Functionally, catalyzes the reversible isomerization of glucose-6-phosphate to fructose-6-phosphate. This chain is Glucose-6-phosphate isomerase, found in Actinobacillus pleuropneumoniae serotype 3 (strain JL03).